The following is a 496-amino-acid chain: Thiamine transporter 2 (496 aa).

Residues Met1–Ser7 are Cytoplasmic-facing. Residues Pro8–Met28 form a helical membrane-spanning segment. Topologically, residues Arg29 to Asn53 are extracellular. Residue Asn45 is glycosylated (N-linked (GlcNAc...) asparagine). A helical membrane pass occupies residues Glu54–Thr74. Over Asp75 to Pro81 the chain is Cytoplasmic. Residues Val82–Gly102 traverse the membrane as a helical segment. The Extracellular portion of the chain corresponds to Val103–Glu110. Residues Phe111–Val131 form a helical membrane-spanning segment. The Cytoplasmic portion of the chain corresponds to Ser132 to Arg144. A helical transmembrane segment spans residues Ser145–Ala165. A glycan (N-linked (GlcNAc...) asparagine) is linked at Asn166. The Extracellular portion of the chain corresponds to Asn166–Tyr169. A helical membrane pass occupies residues Phe170–Leu190. Residues Pro191–Ser282 are Cytoplasmic-facing. Residues Ser210 to Gln248 are disordered. A compositionally biased stretch (basic and acidic residues) spans Glu218–Pro233. The segment covering Thr234 to Gln248 has biased composition (polar residues). A helical membrane pass occupies residues Leu283 to Trp303. At Asp304 to Asn316 the chain is on the extracellular side. The chain crosses the membrane as a helical span at residues Gly317–Val337. Over Lys338–Asp342 the chain is Cytoplasmic. The helical transmembrane segment at Leu343–Met363 threads the bilayer. The Extracellular portion of the chain corresponds to His364–Gly375. Residues Tyr376 to Val396 traverse the membrane as a helical segment. The Cytoplasmic segment spans residues Asn397–Leu405. Residues Val406 to Val426 form a helical membrane-spanning segment. Residues Asp427–Pro434 are Extracellular-facing. Residues Ile435 to Met455 traverse the membrane as a helical segment. Residues Arg456–Leu496 are Cytoplasmic-facing. A disordered region spans residues Asp469–Leu496.

It belongs to the reduced folate carrier (RFC) transporter (TC 2.A.48) family.

Its subcellular location is the membrane. The catalysed reaction is thiamine(out) + H(+)(in) = thiamine(in) + H(+)(out). It carries out the reaction pyridoxine(out) + n H(+)(out) = pyridoxine(in) + n H(+)(in). Mediates high affinity thiamine uptake, probably via a proton anti-port mechanism. Has no folate transport activity. Mediates H(+)-dependent pyridoxine transport. This chain is Thiamine transporter 2 (SLC19A3), found in Macaca fascicularis (Crab-eating macaque).